The primary structure comprises 727 residues: Glycerol-3-phosphate dehydrogenase, mitochondrial (727 aa).

The transit peptide at 1-42 directs the protein to the mitochondrion; that stretch reads MAFQKAVKGTILVGGGALATVLGLSHFAHYKRKQVNLAFVEA. An FAD-binding site is contributed by 71–99; it reads DVLVIGGGATGSGCALDAVTRGLKTALVE. Position 601 is a phosphotyrosine (tyrosine 601). EF-hand domains lie at 623–658 and 659–694; these read SDID…IGVQ and MDEN…IQKG. Aspartate 672, asparagine 674, asparagine 676, glutamine 678, and glutamate 683 together coordinate Ca(2+).

It belongs to the FAD-dependent glycerol-3-phosphate dehydrogenase family. Requires FAD as cofactor.

It localises to the mitochondrion. The enzyme catalyses a quinone + sn-glycerol 3-phosphate = dihydroxyacetone phosphate + a quinol. The protein operates within polyol metabolism; glycerol degradation via glycerol kinase pathway; glycerone phosphate from sn-glycerol 3-phosphate (aerobic route): step 1/1. Its activity is regulated as follows. Calcium-binding enhance the activity of the enzyme. In terms of biological role, calcium-responsive mitochondrial glycerol-3-phosphate dehydrogenase which seems to be a key component of the pancreatic beta-cell glucose-sensing device. This Bos taurus (Bovine) protein is Glycerol-3-phosphate dehydrogenase, mitochondrial (GPD2).